Reading from the N-terminus, the 337-residue chain is Phosphoenolpyruvate transferase (337 aa).

D69 provides a ligand contact to 7,8-didemethyl-8-hydroxy-5-deazariboflavin.

Belongs to the CofD family. As to quaternary structure, homodimer. The cofactor is Mg(2+).

It catalyses the reaction enolpyruvoyl-2-diphospho-5'-guanosine + 7,8-didemethyl-8-hydroxy-5-deazariboflavin = dehydro coenzyme F420-0 + GMP + H(+). It participates in cofactor biosynthesis; coenzyme F420 biosynthesis. Its function is as follows. Catalyzes the transfer of the phosphoenolpyruvate moiety from enoylpyruvoyl-2-diphospho-5'-guanosine (EPPG) to 7,8-didemethyl-8-hydroxy-5-deazariboflavin (FO) with the formation of dehydro coenzyme F420-0 and GMP. This is Phosphoenolpyruvate transferase from Mycobacterium avium (strain 104).